Here is an 859-residue protein sequence, read N- to C-terminus: Homeobox-leucine zipper protein HOX32 (859 aa).

The interval 7–31 (AAVHGVGRQDRSSPGGGGAPQVDTG) is disordered. A DNA-binding region (homeobox) is located at residues 29–92 (DTGKYVRYTP…NRRCREKQRK (64 aa)). A coiled-coil region spans residues 100–129 (VNRKLTAMNKLLMEENDRLQKQVSRLVYEN). Residues 146 to 164 (TSCESVVTSGQHHQQQNPA) show a composition bias toward polar residues. The interval 146 to 172 (TSCESVVTSGQHHQQQNPAATRPQRDA) is disordered. Positions 171–393 (DANNPAGLLA…LRHIRQIAHE (223 aa)) constitute an START domain.

Belongs to the HD-ZIP homeobox family. Class III subfamily. As to expression, expressed in seedlings, roots, stems, leaf sheaths and blades and panicles.

The protein resides in the nucleus. Probable transcription factor. The polypeptide is Homeobox-leucine zipper protein HOX32 (HOX32) (Oryza sativa subsp. japonica (Rice)).